A 157-amino-acid polypeptide reads, in one-letter code: MFDILMYLFENYVHSEIELLVDEDELTKELTRAGFHQVDIIKALSWLEHLADLQESDKPYLCNHAQHSFRIYTKAEMAKLDVECRGFLLFLEQIQVLSVETREMVIDRVMELDEPTLELEDLKWVVLMVLFNVPGNESAYEQMEDLIFEQPEGRLHS.

Belongs to the Smg family.

The protein is Protein Smg homolog of Shewanella frigidimarina (strain NCIMB 400).